Reading from the N-terminus, the 613-residue chain is Ribosome-associated molecular chaperone SSB1 (613 aa).

Alanine 2 is subject to N-acetylalanine. A nucleotide binding domain (NBD) region spans residues alanine 2–glutamate 391. Threonine 16–tyrosine 18 lines the ATP pocket. At threonine 47 the chain carries Phosphothreonine. ATP is bound by residues lysine 73, glycine 205–threonine 207, glutamate 271–serine 278, and glycine 342. Positions threonine 392–proline 402 are inter-domain linker. The substrate binding domain (SBD) stretch occupies residues leucine 403–arginine 613. Residues lysine 428–arginine 430 carry the Contributes to ribosome binding motif. A Phosphothreonine modification is found at threonine 431. The interval serine 516 to serine 612 is lid domain (SBDalpha). Residues isoleucine 574–leucine 582 carry the Nuclear export signal motif. A required for interaction with ribosomes region spans residues glycine 601 to arginine 613.

It belongs to the heat shock protein 70 family. Ssb-type Hsp70 subfamily. As to quaternary structure, binds to ribosomes. Binds close to the ribosomal tunnel exit via contacts with both ribosomal proteins RPL35, RPL39 and RPL19, and rRNA. Directly interacts with nascent polypeptides. This interaction is dependent on the ribosome-associated complex (RAC). Interacts with SSE1. Interacts with FES1. Interacts with NAP1.

The protein localises to the cytoplasm. The enzyme catalyses ATP + H2O = ADP + phosphate + H(+). Ribosome-bound, Hsp70-type chaperone that assists in the cotranslational folding of newly synthesized proteins in the cytosol. Stimulates folding by interacting with nascent chains, binding to short, largely hydrophobic sequences exposed by unfolded proteins, thereby stabilizing longer, more slowly translated, and aggregation-prone nascent polypeptides and domains that cannot fold stably until fully synthesized. The Hsp70-protein substrate interaction depends on ATP-binding and on allosteric regulation between the NBD and the SBD. The ATP-bound state is characterized by a fast exchange rate of substrate (low affinity state), while in the ADP-bound state exchange is much slower (high affinity state). During the Hsp70 cycle, the chaperone switches between the ATP-bound state (open conformation) and the ADP-bound state (closed conformation) by major conformational rearrangements involving mainly the lid domain. Ssb cooperates with a specific Hsp40/Hsp70 co-chaperone termed the ribosome-associated complex (RAC), which stimulates the ATPase activity of the ribosome-associated pool of Ssbs and switches it to the high affinity substrate binding state. Hsp110 chaperone SSE1 and FES1 act as nucleotide exchange factors that cause substrate release. The sequence is that of Ribosome-associated molecular chaperone SSB1 from Saccharomyces cerevisiae (strain ATCC 204508 / S288c) (Baker's yeast).